The primary structure comprises 179 residues: ADP-ribosylation factor-like protein 5B (179 aa).

Gly-2 carries N-myristoyl glycine lipidation. Residues Gly-23–Thr-30, Asp-66–Gln-70, Asn-125–Asp-128, and Ala-159 contribute to the GTP site.

The protein belongs to the small GTPase superfamily. Arf family.

In terms of biological role, binds and exchanges GTP and GDP. In Mus musculus (Mouse), this protein is ADP-ribosylation factor-like protein 5B (Arl5b).